Here is a 114-residue protein sequence, read N- to C-terminus: Probable non-functional T cell receptor beta variable 6-7 (114 aa).

Residues 1–21 form the signal peptide; that stretch reads MSLGLLCCVAFSLLWAGPMNA. In terms of domain architecture, Ig-like spans 22–114; the sequence is GVTQTPKFHV…TSVYFCASSY (93 aa). A disulfide bridge connects residues Cys42 and Cys110. N-linked (GlcNAc...) asparagine glycosylation is present at Asn84.

In terms of assembly, alpha-beta TR is a heterodimer composed of an alpha and beta chain; disulfide-linked. The alpha-beta TR is associated with the transmembrane signaling CD3 coreceptor proteins to form the TR-CD3 (TcR or TCR). The assembly of alpha-beta TR heterodimers with CD3 occurs in the endoplasmic reticulum where a single alpha-beta TR heterodimer associates with one CD3D-CD3E heterodimer, one CD3G-CD3E heterodimer and one CD247 homodimer forming a stable octameric structure. CD3D-CD3E and CD3G-CD3E heterodimers preferentially associate with TR alpha and TR beta chains, respectively. The association of the CD247 homodimer is the last step of TcR assembly in the endoplasmic reticulum and is required for transport to the cell surface.

The protein localises to the cell membrane. Functionally, probable non-functional open reading frame (ORF) of V region of the variable domain of T cell receptor (TR) beta chain. Non-functional ORF generally cannot participate in the synthesis of a productive T cell receptor (TR) chain due to altered V-(D)-J or switch recombination and/or splicing site (at mRNA level) and/or conserved amino acid change (protein level). Alpha-beta T cell receptors are antigen specific receptors which are essential to the immune response and are present on the cell surface of T lymphocytes. Recognize peptide-major histocompatibility (MH) (pMH) complexes that are displayed by antigen presenting cells (APC), a prerequisite for efficient T cell adaptive immunity against pathogens. Binding of alpha-beta TR to pMH complex initiates TR-CD3 clustering on the cell surface and intracellular activation of LCK that phosphorylates the ITAM motifs of CD3G, CD3D, CD3E and CD247 enabling the recruitment of ZAP70. In turn ZAP70 phosphorylates LAT, which recruits numerous signaling molecules to form the LAT signalosome. The LAT signalosome propagates signal branching to three major signaling pathways, the calcium, the mitogen-activated protein kinase (MAPK) kinase and the nuclear factor NF-kappa-B (NF-kB) pathways, leading to the mobilization of transcription factors that are critical for gene expression and essential for T cell growth and differentiation. The T cell repertoire is generated in the thymus, by V-(D)-J rearrangement. This repertoire is then shaped by intrathymic selection events to generate a peripheral T cell pool of self-MH restricted, non-autoaggressive T cells. Post-thymic interaction of alpha-beta TR with the pMH complexes shapes TR structural and functional avidity. The chain is Probable non-functional T cell receptor beta variable 6-7 from Homo sapiens (Human).